The chain runs to 353 residues: Protein RecA (353 aa).

An ATP-binding site is contributed by 75 to 82 (GPESSGKT).

This sequence belongs to the RecA family.

Its subcellular location is the cytoplasm. In terms of biological role, can catalyze the hydrolysis of ATP in the presence of single-stranded DNA, the ATP-dependent uptake of single-stranded DNA by duplex DNA, and the ATP-dependent hybridization of homologous single-stranded DNAs. It interacts with LexA causing its activation and leading to its autocatalytic cleavage. This is Protein RecA from Cupriavidus pinatubonensis (strain JMP 134 / LMG 1197) (Cupriavidus necator (strain JMP 134)).